Consider the following 384-residue polypeptide: MDPAGGPRGVLPRPCRVLVLLNPRGGKGKALQLFRSHVQPLLAEAEISFTLMLTERRNHARELVRSEELGRWDALVVMSGDGLMHEVVNGLMERPDWETAIQKPLCSLPAGSGNALAASLNHYAGYEQVTNEDLLTNCTLLLCRRLLSPMNLLSLHTASGLRLFSVLSLAWGFIADVDLESEKYRRLGEMRFTLGTFLRLAALRTYRGRLAYLPVGRVGSKTPASPVVVQQGPVDAHLVPLEEPVPSHWTVVPDEDFVLVLALLHSHLGSEMFAAPMGRCAAGVMHLFYVRAGVSRAMLLRLFLAMEKGRHMEYECPYLVYVPVVAFRLEPKDGKGVFAVDGELMVSEAVQGQVHPNYFWMVSGCVEPPPSWKPQQMPPPEEPL.

Positions Pro-12–Ser-159 constitute a DAGKc domain. Residues Asn-22–Arg-24 and Thr-54–Asn-58 contribute to the ATP site. Position 79 to 82 (Ser-79 to Gly-82) interacts with substrate. The active-site Proton donor/acceptor is the Asp-81. ATP contacts are provided by residues Glu-86 and Gly-111–Gly-113. 2 consecutive short sequence motifs (nuclear export signal) follow at residues Leu-147–Leu-155 and Leu-161–Leu-169. Asp-178 is a substrate binding site. Residues Arg-185 and Arg-191 each contribute to the ATP site. Thr-193 is subject to Phosphothreonine. Residue Ser-225 is modified to Phosphoserine. Asp-341–Glu-343 contacts ATP.

In terms of assembly, interacts with ACY1. Binds to calmodulin. Interacts with SPHKAP. Interacts with CIB1, the interaction occurs in a calcium-dependent manner. Interacts with TRAF2. Interacts with EEF1A1; the interaction enhances SPHK1 kinase activity. It depends on Mg(2+) as a cofactor. In terms of tissue distribution, widely expressed with highest levels in adult liver, kidney, heart and skeletal muscle. Expressed in brain cortex (at protein level).

The protein localises to the cytoplasm. Its subcellular location is the nucleus. It is found in the cell membrane. The protein resides in the endosome membrane. It localises to the membrane. The protein localises to the clathrin-coated pit. Its subcellular location is the synapse. It carries out the reaction a sphingoid base + ATP = a sphingoid 1-phosphate + ADP + H(+). The enzyme catalyses L-seryl-[protein] + acetyl-CoA = O-acetyl-L-seryl-[protein] + CoA. The catalysed reaction is sphinganine + ATP = sphinganine 1-phosphate + ADP + H(+). It catalyses the reaction sphing-4-enine + ATP = sphing-4-enine 1-phosphate + ADP + H(+). It carries out the reaction 1-O-hexadecyl-2-amino-sn-glycerol + ATP = 1-O-hexadecyl-2-desoxy-2-amino-sn-glycero-3-phosphate + ADP + H(+). Its activity is regulated as follows. Acetyltransferase activity increases in presence of the kinase substrate, sphingosine. In Purkinje cells, kinase activity on sphingosine increases in presence of VEGFA. In neurons, kinase activity increases during the first 24h in presence of Amyloid-beta protein 42 to decrease after 96h. In terms of biological role, catalyzes the phosphorylation of sphingosine to form sphingosine 1-phosphate (SPP), a lipid mediator with both intra- and extracellular functions. Also acts on D-erythro-sphingosine and to a lesser extent sphinganine, but not other lipids, such as D,L-threo-dihydrosphingosine, N,N-dimethylsphingosine, diacylglycerol, ceramide, or phosphatidylinositol. In contrast to proapoptotic SPHK2, has a negative effect on intracellular ceramide levels, enhances cell growth and inhibits apoptosis. Involved in the regulation of inflammatory response and neuroinflammation. Via the product sphingosine 1-phosphate, stimulates TRAF2 E3 ubiquitin ligase activity, and promotes activation of NF-kappa-B in response to TNF signaling leading to IL17 secretion. In response to TNF and in parallel to NF-kappa-B activation, negatively regulates RANTES induction through p38 MAPK signaling pathway. Involved in endocytic membrane trafficking induced by sphingosine, recruited to dilate endosomes, also plays a role on later stages of endosomal maturation and membrane fusion independently of its kinase activity. In Purkinje cells, seems to be also involved in the regulation of autophagosome-lysosome fusion upon VEGFA. Functionally, has serine acetyltransferase activity on PTGS2/COX2 in an acetyl-CoA dependent manner. The acetyltransferase activity increases in presence of the kinase substrate, sphingosine. During neuroinflammation, through PTGS2 acetylation, promotes neuronal secretion of specialized preresolving mediators (SPMs), especially 15-R-lipoxin A4, which results in an increase of phagocytic microglia. In Homo sapiens (Human), this protein is Sphingosine kinase 1.